We begin with the raw amino-acid sequence, 420 residues long: Probable 3-isopropylmalate dehydratase large subunit (420 aa).

[4Fe-4S] cluster-binding residues include C301, C361, and C364.

The protein belongs to the aconitase/IPM isomerase family. LeuC type 2 subfamily. In terms of assembly, heterodimer of LeuC and LeuD. [4Fe-4S] cluster is required as a cofactor.

The enzyme catalyses (2R,3S)-3-isopropylmalate = (2S)-2-isopropylmalate. It participates in amino-acid biosynthesis; L-leucine biosynthesis; L-leucine from 3-methyl-2-oxobutanoate: step 2/4. Functionally, catalyzes the isomerization between 2-isopropylmalate and 3-isopropylmalate, via the formation of 2-isopropylmaleate. The chain is Probable 3-isopropylmalate dehydratase large subunit from Methanosarcina mazei (strain ATCC BAA-159 / DSM 3647 / Goe1 / Go1 / JCM 11833 / OCM 88) (Methanosarcina frisia).